A 43-amino-acid polypeptide reads, in one-letter code: GKLTDSQEDYIRHVWDDVNRKLITAKALERVNLVAEALSSNYH.

In terms of assembly, possible monomer. Expressed in mucus-secreting tissues.

The protein resides in the secreted. Shows antimicrobial activity against M.luteus (MIC=4 uM) and E.coli (MIC=12 uM), as well as against the yeast C.tropicalis (MIC=4 uM). Shows a pro-inflammatory effect, since the topical application of the protein induces an increase of cellular recruitment characterized by an increase in the number of leukocyte rolling. Does not show hemolytic activity on human erythrocytes (at doses up to 100 uM). This chain is Antimicrobial protein PcfHb, found in Potamotrygon cf. henlei (Freshwater stingray).